The chain runs to 362 residues: 3-isopropylmalate dehydrogenase (362 aa).

78–91 contributes to the NAD(+) binding site; that stretch reads GPKWEHLAPNDQPE. Substrate contacts are provided by Arg99, Arg109, Arg138, and Asp227. Mg(2+)-binding residues include Asp227, Asp251, and Asp255. Residue 285–297 participates in NAD(+) binding; sequence GSAPDIAGKNIAN.

The protein belongs to the isocitrate and isopropylmalate dehydrogenases family. LeuB type 1 subfamily. In terms of assembly, homodimer. Requires Mg(2+) as cofactor. It depends on Mn(2+) as a cofactor.

It localises to the cytoplasm. The enzyme catalyses (2R,3S)-3-isopropylmalate + NAD(+) = 4-methyl-2-oxopentanoate + CO2 + NADH. It functions in the pathway amino-acid biosynthesis; L-leucine biosynthesis; L-leucine from 3-methyl-2-oxobutanoate: step 3/4. Catalyzes the oxidation of 3-carboxy-2-hydroxy-4-methylpentanoate (3-isopropylmalate) to 3-carboxy-4-methyl-2-oxopentanoate. The product decarboxylates to 4-methyl-2 oxopentanoate. This chain is 3-isopropylmalate dehydrogenase, found in Photobacterium profundum (strain SS9).